The chain runs to 123 residues: Thioredoxin domain-containing protein 17 (123 aa).

Alanine 2 is modified (N-acetylalanine). Residues serine 41 to aspartate 123 form the Thioredoxin domain. Active-site nucleophile residues include cysteine 43 and cysteine 46. An intrachain disulfide couples cysteine 43 to cysteine 46.

The protein belongs to the thioredoxin family. As to quaternary structure, interacts with TRXR1 and DYNLL1/DNCL1. Post-translationally, the oxidized protein is reduced by TRXR1.

It localises to the cytoplasm. In terms of biological role, disulfide reductase. May participate in various redox reactions through the reversible oxidation of its active center dithiol to a disulfide and catalyze dithiol-disulfide exchange reactions. Modulates TNF-alpha signaling and NF-kappa-B activation. Has peroxidase activity and may contribute to the elimination of cellular hydrogen peroxide. The protein is Thioredoxin domain-containing protein 17 (Txndc17) of Mus musculus (Mouse).